The chain runs to 500 residues: Kynurenine 3-monooxygenase acdD (500 aa).

FAD-binding positions include V17 and 36–38 (ELR). N50 carries an N-linked (GlcNAc...) asparagine glycan. A58 is a binding site for FAD. Residues R89 and Y106 each coordinate L-kynurenine. Positions 118 and 143 each coordinate FAD. The N-linked (GlcNAc...) asparagine glycan is linked to N163. FAD contacts are provided by residues D321 and 332-335 (QGLN). L-kynurenine contacts are provided by N392 and Y428. Residues 451–471 (LLLYGSISAIISSAAIVGVLA) form a helical membrane-spanning segment.

It belongs to the aromatic-ring hydroxylase family. KMO subfamily. It depends on FAD as a cofactor.

It is found in the mitochondrion outer membrane. It catalyses the reaction L-kynurenine + NADPH + O2 + H(+) = 3-hydroxy-L-kynurenine + NADP(+) + H2O. It functions in the pathway secondary metabolite biosynthesis. Its pathway is cofactor biosynthesis; NAD(+) biosynthesis; quinolinate from L-kynurenine: step 1/3. Indoleamine 2,3-dioxygenase; part of the gene cluster that mediates the biosynthesis of aspcandine, a pyrrolobenzazepine alkaloid. Initially, the indoleamine 2,3-dioxygenase acdA accepts L-tryptophan and performs the oxidative opening of the indole ring to yield N'-formyl-L-kynurenine, which undergoes the spontaneous deformylation reaction to provide L-kynurenine. The kynurenine 3-monooxygenase acdD then hydroxylates L-kynurenine to afford 3-hydroxy-L-kynurenine. 3-hydroxy-L-kynurenine is activated by the A domain of the NRPS-PKS acdB and subsequently loaded onto the enzyme. The KS domain conducts the decarboxylative condensation of the 3-hydroxy-L-kynurenyl and malonyl moieties, and subsequent nucleophilic attacks by the two amino groups would occur nonenzymatically at two distinct positions, achieving the chain release and the construction of the tricyclic system. Finally, the dehydration reaction completes the biosynthesis to yield aspcandine. The sequence is that of Kynurenine 3-monooxygenase acdD from Aspergillus candidus.